A 353-amino-acid polypeptide reads, in one-letter code: Jasmonate-induced oxygenase 4 (353 aa).

The 101-residue stretch at Val-202–Pro-302 folds into the Fe2OG dioxygenase domain. Arg-207 serves as a coordination point for jasmonate. Residues Asn-209 and Tyr-211 each coordinate 2-oxoglutarate. 3 residues coordinate Fe cation: His-226, Asp-228, and His-283. 2 residues coordinate 2-oxoglutarate: Arg-293 and Ser-295. The jasmonate site is built by Arg-332 and Arg-336.

The protein belongs to the iron/ascorbate-dependent oxidoreductase family. Requires L-ascorbate as cofactor. Fe(2+) serves as cofactor.

The catalysed reaction is jasmonate + 2-oxoglutarate + O2 = (1R,2R)-12-hydroxyjasmonate + succinate + CO2. Functionally, 2-oxoglutarate-dependent dioxygenase involved in the oxidation of jasmonate (JA), a stress-induced phytohormone synthesized in response to attack by pathogens and herbivores, which triggers the activation of defense responses via the JA-mediated signaling pathway. Converts JA to 12-hydroxyjasmonate (12OH-JA), an inactive form of JA. Is specific to free JA, and cannot oxidize the bioactive form jasmonoyl-L-isoleucine (JA-Ile) or other JA-amino acid conjugates. Prevents over-accumulation of JA and indirectly its bioactive form JA-Ile under stress response. Acts as a negative regulator of JA-mediated defense signaling, by contributing to 12OH-JA accumulation, which represses JA defense responses upon infection by the fungal pathogen Botrytis cinerea. Acts as a negative regulator of JA-mediated defense responses upon infestation by the herbivorous caterpillar Mamestra brassicae. The protein is Jasmonate-induced oxygenase 4 of Arabidopsis thaliana (Mouse-ear cress).